The chain runs to 221 residues: N-(5'-phosphoribosyl)anthranilate isomerase (221 aa).

This sequence belongs to the TrpF family.

It carries out the reaction N-(5-phospho-beta-D-ribosyl)anthranilate = 1-(2-carboxyphenylamino)-1-deoxy-D-ribulose 5-phosphate. Its pathway is amino-acid biosynthesis; L-tryptophan biosynthesis; L-tryptophan from chorismate: step 3/5. The chain is N-(5'-phosphoribosyl)anthranilate isomerase from Chlorobaculum tepidum (strain ATCC 49652 / DSM 12025 / NBRC 103806 / TLS) (Chlorobium tepidum).